The following is a 367-amino-acid chain: Protein trichome birefringence-like 39 (367 aa).

A helical; Signal-anchor for type II membrane protein membrane pass occupies residues 7 to 29 (GNPSFLFFFFFFLCLSTVSAYIN). The GDS motif motif lies at 120 to 122 (GDS). Positions 343 to 357 (DCSHWCLPGLPDTWN) match the DCXHWCLPGXXDXWN motif motif.

Belongs to the PC-esterase family. TBL subfamily.

It is found in the membrane. Its function is as follows. May act as a bridging protein that binds pectin and other cell wall polysaccharides. Probably involved in maintaining esterification of pectins. May be involved in the specific O-acetylation of cell wall polymers. In Arabidopsis thaliana (Mouse-ear cress), this protein is Protein trichome birefringence-like 39 (TBL39).